A 339-amino-acid chain; its full sequence is T-cell surface glycoprotein CD1a (339 aa).

An N-terminal signal peptide occupies residues M1 to S18. At E19–S300 the chain is on the extracellular side. N-linked (GlcNAc...) asparagine glycosylation is found at N38 and N75. F91–F95 contributes to the a D-galactosylceramide binding site. 2 disulfide bridges follow: C120–C184 and C224–C279. N146 carries N-linked (GlcNAc...) asparagine glycosylation. The Ig-like domain occupies P185–W295. A helical membrane pass occupies residues V301–W321. Topologically, residues H322–E339 are cytoplasmic.

As to quaternary structure, heterodimer with B2M (beta-2-microglobulin). Interacts with CD74.

Its subcellular location is the cell membrane. It localises to the membrane raft. The protein localises to the endosome membrane. In terms of biological role, antigen-presenting protein that binds self and non-self lipid and glycolipid antigens and presents them to T-cell receptors on natural killer T-cells. This Sus scrofa (Pig) protein is T-cell surface glycoprotein CD1a (CD1A).